The sequence spans 127 residues: Small ribosomal subunit protein eS6 (127 aa).

It belongs to the eukaryotic ribosomal protein eS6 family.

In Picrophilus torridus (strain ATCC 700027 / DSM 9790 / JCM 10055 / NBRC 100828 / KAW 2/3), this protein is Small ribosomal subunit protein eS6.